A 119-amino-acid chain; its full sequence is MSINIVTLVGRVGTDPDIKYFESGSVKCRLTLAVNRRSKNDKPDWFTLELWDKTAEVAGNYVRKGSLIGVKGSLKFDSWSDRQTGVNRSTPVIRVDQLELLGSKQDRDGGSSDFAPENF.

Residues 3–102 enclose the SSB domain; it reads INIVTLVGRV…IRVDQLELLG (100 aa).

Homotetramer.

This Anabaena variabilis protein is Single-stranded DNA-binding protein (ssb1).